A 516-amino-acid chain; its full sequence is Probable cyclic di-GMP phosphodiesterase PdeB (516 aa).

2 helical membrane-spanning segments follow: residues 6–26 (LVGL…GLSI) and 242–262 (QVFI…MFVL). The 249-residue stretch at 268 to 516 (IQSPHHRLQD…DFLRWAEQHL (249 aa)) folds into the EAL domain.

The protein resides in the cell inner membrane. It carries out the reaction 3',3'-c-di-GMP + H2O = 5'-phosphoguanylyl(3'-&gt;5')guanosine + H(+). In terms of biological role, phosphodiesterase (PDE) that catalyzes the hydrolysis of cyclic-di-GMP (c-di-GMP) to 5'-pGpG. This is Probable cyclic di-GMP phosphodiesterase PdeB from Escherichia coli (strain K12).